Consider the following 154-residue polypeptide: Fimbrial protein (154 aa).

The propeptide at 1–6 is leader sequence; it reads MKAQKG. The residue at position 7 (phenylalanine 7) is an N-methylphenylalanine. The helical transmembrane segment at 7-27 threads the bilayer; the sequence is FTLIELMIVVAIIGILAAIAI. Cysteines 133 and 151 form a disulfide.

Belongs to the N-Me-Phe pilin family. The pili are polar flexible filaments of about 5.4 nanometers diameter and 2.5 micrometers average length; they consist of only a single polypeptide chain arranged in a helical configuration of five subunits per turn in the assembled pilus.

It localises to the fimbrium. The protein localises to the membrane. This is Fimbrial protein (pilA) from Pseudomonas aeruginosa.